The following is a 59-amino-acid chain: Large ribosomal subunit protein bL32 (59 aa).

Residues 1-59 (MAVQQNRKTPSKRGMRRSHDSLSKPTLSTEQNTGETHRRHHISADGYYRGRKVTRGQDD) are disordered. A compositionally biased stretch (polar residues) spans 23 to 34 (SKPTLSTEQNTG). Positions 49–59 (RGRKVTRGQDD) are enriched in basic residues.

This sequence belongs to the bacterial ribosomal protein bL32 family.

This Halorhodospira halophila (strain DSM 244 / SL1) (Ectothiorhodospira halophila (strain DSM 244 / SL1)) protein is Large ribosomal subunit protein bL32.